A 472-amino-acid polypeptide reads, in one-letter code: Protein translocase subunit SecD (472 aa).

Helical transmembrane passes span I8–G28, T300–Y320, V325–A347, G353–I375, V396–F416, and G424–S444.

Belongs to the SecD/SecF family. SecD subfamily. As to quaternary structure, forms a complex with SecF. Part of the essential Sec protein translocation apparatus which comprises SecA, SecYEG and auxiliary proteins SecDF. Other proteins may also be involved.

The protein resides in the cell inner membrane. Functionally, part of the Sec protein translocase complex. Interacts with the SecYEG preprotein conducting channel. SecDF uses the proton motive force (PMF) to complete protein translocation after the ATP-dependent function of SecA. The chain is Protein translocase subunit SecD from Petrotoga mobilis (strain DSM 10674 / SJ95).